The primary structure comprises 286 residues: L-cysteine S-thiosulfotransferase subunit SoxA (286 aa).

Residues 1–27 form the signal peptide; sequence MKKTIQRGLFTGALVLMTAMTAKPANA. C106 and C137 form a disulfide bridge. One can recognise a Cytochrome c domain in the interval 180 to 286; that stretch reads DAYMKGKKFF…LKYNGPASRK (107 aa). The heme site is built by C200 and H204. Position 243 (R243) interacts with substrate. C247 contributes to the heme binding site. C247 functions as the Cysteine persulfide intermediate in the catalytic mechanism.

Belongs to the SoxA family. As to quaternary structure, heterodimer of SoxA and SoxX. The SoxAX complex interacts with CT1020, SoxAX-binding protein SaxB (SoxK); this interaction seems to be between SoxA and CT1020 and stimulates catalytic activity of the SoxAX complex. It depends on heme as a cofactor. In terms of processing, cysteine persulfide at Cys-247.

The protein localises to the periplasm. It catalyses the reaction L-cysteinyl-[SoxY protein] + thiosulfate + 2 Fe(III)-[cytochrome c] = S-sulfosulfanyl-L-cysteinyl-[SoxY protein] + 2 Fe(II)-[cytochrome c] + 2 H(+). It carries out the reaction S-sulfanyl-L-cysteinyl-[SoxY protein] + thiosulfate + 2 Fe(III)-[cytochrome c] = S-(2-sulfodisulfanyl)-L-cysteinyl-[SoxY protein] + 2 Fe(II)-[cytochrome c] + 2 H(+). C-type monoheme cytochrome, which is part of the SoxAX cytochrome complex involved in sulfur oxidation. The SoxAX complex catalyzes the formation of a heterodisulfide bond between the conserved cysteine residue on a sulfur carrier SoxYZ complex subunit SoxY and thiosulfate or other inorganic sulfur substrates. This leads to the liberation of two electrons, which may be transferred from the SoxAX complex to another cytochrome c and which then may be used for reductive CO(2) fixation. The protein is L-cysteine S-thiosulfotransferase subunit SoxA of Chlorobaculum tepidum (strain ATCC 49652 / DSM 12025 / NBRC 103806 / TLS) (Chlorobium tepidum).